A 217-amino-acid polypeptide reads, in one-letter code: Large ribosomal subunit protein bL25 (217 aa).

The tract at residues 178 to 217 (VVAPTEEPTEEEIEAMEGEQQTEEPEVVGESKEDEEKTEE) is disordered. Over residues 184–205 (EPTEEEIEAMEGEQQTEEPEVV) the composition is skewed to acidic residues. A compositionally biased stretch (basic and acidic residues) spans 206–217 (GESKEDEEKTEE).

This sequence belongs to the bacterial ribosomal protein bL25 family. CTC subfamily. Part of the 50S ribosomal subunit; part of the 5S rRNA/L5/L18/L25 subcomplex. Contacts the 5S rRNA. Binds to the 5S rRNA independently of L5 and L18.

Its function is as follows. This is one of the proteins that binds to the 5S RNA in the ribosome where it forms part of the central protuberance. The polypeptide is Large ribosomal subunit protein bL25 (Staphylococcus aureus (strain USA300)).